Consider the following 191-residue polypeptide: Threonylcarbamoyl-AMP synthase (191 aa).

The YrdC-like domain occupies P10–R191.

It belongs to the SUA5 family. TsaC subfamily.

Its subcellular location is the cytoplasm. The catalysed reaction is L-threonine + hydrogencarbonate + ATP = L-threonylcarbamoyladenylate + diphosphate + H2O. Functionally, required for the formation of a threonylcarbamoyl group on adenosine at position 37 (t(6)A37) in tRNAs that read codons beginning with adenine. Catalyzes the conversion of L-threonine, HCO(3)(-)/CO(2) and ATP to give threonylcarbamoyl-AMP (TC-AMP) as the acyladenylate intermediate, with the release of diphosphate. The sequence is that of Threonylcarbamoyl-AMP synthase from Halorhodospira halophila (strain DSM 244 / SL1) (Ectothiorhodospira halophila (strain DSM 244 / SL1)).